We begin with the raw amino-acid sequence, 416 residues long: Glutamyl-tRNA reductase (416 aa).

Residues 48–51 (TCNR), S104, 109–111 (EPQ), and Q115 each bind substrate. C49 acts as the Nucleophile in catalysis. 184–189 (GAGEMI) is a binding site for NADP(+).

Belongs to the glutamyl-tRNA reductase family. In terms of assembly, homodimer.

It catalyses the reaction (S)-4-amino-5-oxopentanoate + tRNA(Glu) + NADP(+) = L-glutamyl-tRNA(Glu) + NADPH + H(+). Its pathway is porphyrin-containing compound metabolism; protoporphyrin-IX biosynthesis; 5-aminolevulinate from L-glutamyl-tRNA(Glu): step 1/2. In terms of biological role, catalyzes the NADPH-dependent reduction of glutamyl-tRNA(Glu) to glutamate 1-semialdehyde (GSA). In Dechloromonas aromatica (strain RCB), this protein is Glutamyl-tRNA reductase.